Consider the following 214-residue polypeptide: Phosphatidylcholine transfer protein (214 aa).

M1 bears the N-acetylmethionine mark. Residues 1 to 212 form the START domain; that stretch reads MAGPAAHFSD…MVKACQNYHK (212 aa). The a 1,2-diacyl-sn-glycero-3-phosphocholine site is built by Y72 and R78. Phosphoserine is present on S139. Residue Q157 participates in a 1,2-diacyl-sn-glycero-3-phosphocholine binding.

As to quaternary structure, interacts with ACOT13/THEM2.

The protein localises to the cytoplasm. Lipid transfer protein that promotes intermembrane transfer of phosphatidylcholines but no other phospholipids. Binds a single lipid molecule. May play a role in hepatocellular selection and transport of phosphatidylcholines during bile formation. This Rattus norvegicus (Rat) protein is Phosphatidylcholine transfer protein (Pctp).